We begin with the raw amino-acid sequence, 299 residues long: Mimecan (299 aa).

The signal sequence occupies residues Met1 to Pro19. Asn89 carries an N-linked (GlcNAc...) (keratan sulfate) asparagine glycan. LRR repeat units lie at residues Asp113 to Ile132, Lys133 to Ile156, Glu157 to Leu180, Leu181 to Ile200, Lys201 to Leu226, Glu227 to Ile247, and Thr248 to Val278. Residue Asn215 is glycosylated (N-linked (GlcNAc...) (keratan sulfate) asparagine). The N-linked (GlcNAc...) asparagine glycan is linked to Asn246. Cysteines 256 and 289 form a disulfide. Asn259 carries an N-linked (GlcNAc...) (keratan sulfate) asparagine glycan.

Belongs to the small leucine-rich proteoglycan (SLRP) family. SLRP class III subfamily. Post-translationally, contains keratan sulfate. Keratan sulfate attachment is observed in the cornea but the protein also exists in other tissues without keratan sulfate. In terms of processing, the 12 kDa OIF in bone and the 25 kDa KSPG25 protein in cornea are probably proteolytic fragments. Bone and cornea.

Its subcellular location is the secreted. The protein resides in the extracellular space. It localises to the extracellular matrix. In terms of biological role, induces bone formation in conjunction with TGF-beta-1 or TGF-beta-2. This is Mimecan (OGN) from Bos taurus (Bovine).